The following is a 279-amino-acid chain: DegV domain-containing protein SpyM3_1149 (279 aa).

The DegV domain occupies 4–278 (IKIVTDSSIT…EGAFAVMVRY (275 aa)). The hexadecanoate site is built by T62 and S95.

Functionally, may bind long-chain fatty acids, such as palmitate, and may play a role in lipid transport or fatty acid metabolism. The chain is DegV domain-containing protein SpyM3_1149 from Streptococcus pyogenes serotype M3 (strain ATCC BAA-595 / MGAS315).